Consider the following 81-residue polypeptide: MKKGIHPEFDLVVFEDMAGNQFLTRSTKIPKETTTFEGKEYPVIKVAVSSKSHPFYTGEQRFVDTAGRVDKFNKKFNLGKK.

This sequence belongs to the bacterial ribosomal protein bL31 family. Type A subfamily. Part of the 50S ribosomal subunit.

Its function is as follows. Binds the 23S rRNA. The sequence is that of Large ribosomal subunit protein bL31 (rpmE) from Fusobacterium nucleatum subsp. nucleatum (strain ATCC 25586 / DSM 15643 / BCRC 10681 / CIP 101130 / JCM 8532 / KCTC 2640 / LMG 13131 / VPI 4355).